Here is a 472-residue protein sequence, read N- to C-terminus: Methanethiol oxidase (472 aa).

Ala-2 bears the N-acetylalanine mark. Phosphoserine occurs at positions 111 and 467.

It belongs to the selenium-binding protein family. Interacts with USP33. The N-terminus is blocked. Highly expressed in liver, kidney and, to a lesser extent, lung.

Its subcellular location is the nucleus. It is found in the cytoplasm. The protein localises to the cytosol. It localises to the membrane. The catalysed reaction is methanethiol + O2 + H2O = hydrogen sulfide + formaldehyde + H2O2 + H(+). It functions in the pathway organosulfur degradation. Catalyzes the oxidation of methanethiol, an organosulfur compound known to be produced in substantial amounts by gut bacteria. Selenium-binding protein which may be involved in the sensing of reactive xenobiotics in the cytoplasm. May be involved in intra-Golgi protein transport. This chain is Methanethiol oxidase (Selenbp1), found in Mus musculus (Mouse).